We begin with the raw amino-acid sequence, 361 residues long: Heme A synthase (361 aa).

Transmembrane regions (helical) follow at residues 22–42, 109–129, 139–159, 175–195, 208–228, 269–289, 303–323, and 324–344; these read LWVR…VLVG, LLAR…WVTG, LLGI…MVAS, HLTI…GLAP, FAFW…LVAG, FVHR…AIAT, VLLF…LLMV, and VPMD…GFAT. A heme-binding site is contributed by His-271. His-332 contacts heme.

It belongs to the COX15/CtaA family. Type 2 subfamily. As to quaternary structure, interacts with CtaB. Heme b serves as cofactor.

It is found in the cell membrane. It carries out the reaction Fe(II)-heme o + 2 A + H2O = Fe(II)-heme a + 2 AH2. The protein operates within porphyrin-containing compound metabolism; heme A biosynthesis; heme A from heme O: step 1/1. Functionally, catalyzes the conversion of heme O to heme A by two successive hydroxylations of the methyl group at C8. The first hydroxylation forms heme I, the second hydroxylation results in an unstable dihydroxymethyl group, which spontaneously dehydrates, resulting in the formyl group of heme A. The polypeptide is Heme A synthase (Chelativorans sp. (strain BNC1)).